A 404-amino-acid chain; its full sequence is Metacaspase-1 (404 aa).

The disordered stretch occupies residues 1–97; the sequence is MHHHHQQPSY…NPQAFGHGAP (97 aa). Residues His-195 and Cys-251 contribute to the active site.

It belongs to the peptidase C14B family.

Functionally, involved in cell death (apoptosis). This Emericella nidulans (strain FGSC A4 / ATCC 38163 / CBS 112.46 / NRRL 194 / M139) (Aspergillus nidulans) protein is Metacaspase-1 (casA).